The chain runs to 546 residues: Membrane protein insertase YidC (546 aa).

Residues 8–28 (ILLATVLSVGILILWQVIFPT) form a helical membrane-spanning segment. A disordered region spans residues 31 to 70 (VPPKPAPPPAAEVAKPAAPASPAPGAAAPAVPAPPPDAPE). Residues 41-60 (AEVAKPAAPASPAPGAAAPA) are compositionally biased toward low complexity. 5 consecutive transmembrane segments (helical) span residues 326-346 (IDYGAVAKFFALFARGLLYVM), 356-376 (WGVAIILLTVLVRLVLFPLTY), 422-442 (LGGCLPMLLQMPVWFALYAAL), 459-479 (LTAHDPYFILPIAMGISSFVM), and 498-518 (FFPGFFTVIMLFVPGGLTLYI).

Belongs to the OXA1/ALB3/YidC family. Type 1 subfamily. In terms of assembly, interacts with the Sec translocase complex via SecD. Specifically interacts with transmembrane segments of nascent integral membrane proteins during membrane integration.

Its subcellular location is the cell inner membrane. In terms of biological role, required for the insertion and/or proper folding and/or complex formation of integral membrane proteins into the membrane. Involved in integration of membrane proteins that insert both dependently and independently of the Sec translocase complex, as well as at least some lipoproteins. Aids folding of multispanning membrane proteins. The protein is Membrane protein insertase YidC of Anaeromyxobacter sp. (strain K).